We begin with the raw amino-acid sequence, 239 residues long: Regulator protein TubY (239 aa).

The required to bind TubZ stretch occupies residues 138–239 (INNTISQQLS…KGFFGKLFKR (102 aa)). Residues 150-229 (LNAHNEALEQ…KQQNEEQNNK (80 aa)) are a coiled coil. The span at 217–228 (EERKQQNEEQNN) shows a compositional bias: basic and acidic residues. Residues 217–239 (EERKQQNEEQNNKKGFFGKLFKR) form a disordered region. A compositionally biased stretch (low complexity) spans 229 to 239 (KKGFFGKLFKR).

In terms of assembly, forms homooctamers in the absence of the last 13 residues; the coiled coil domain is required for oligomerization. In the presence of GTP and Mg(2+) binds to TubZ and also to TubZ-TubR-tubC DNA; the latter is reshaped from large filament bundles to rings of 30-40 nm diameter.

Its subcellular location is the host cytoplasm. Functionally, a probable TubZ filament regulator that is part of the type III partition system presumably used to ensure correct segregation of this bacteriophage. Binds to TubZ in the presence of GTP and Mg(2+), and to TubZ-TubR-tubC (tubC is the centromere-like site). The latter complex is reshaped from large bundles to rings by TubY. Modifies TubZ filaments formed in the presence of GDP to make them thinner and more flexible; in GDP and lacking the last 8 residues of TubZ makes rings without TubT-tubC. The polypeptide is Regulator protein TubY (Clostridium botulinum C (Clostridium botulinum C bacteriophage)).